We begin with the raw amino-acid sequence, 111 residues long: Putative pterin-4-alpha-carbinolamine dehydratase (111 aa).

It belongs to the pterin-4-alpha-carbinolamine dehydratase family.

The catalysed reaction is (4aS,6R)-4a-hydroxy-L-erythro-5,6,7,8-tetrahydrobiopterin = (6R)-L-erythro-6,7-dihydrobiopterin + H2O. The chain is Putative pterin-4-alpha-carbinolamine dehydratase from Chlorobaculum tepidum (strain ATCC 49652 / DSM 12025 / NBRC 103806 / TLS) (Chlorobium tepidum).